The sequence spans 202 residues: Coiled-coil domain-containing protein 69 (202 aa).

Basic residues predominate over residues 1–11 (MGCRQSRHSRG). 2 disordered regions span residues 1–20 (MGCR…VEET) and 32–52 (GRIL…SNAQ). The N-myristoyl glycine moiety is linked to residue Gly2. Positions 32-42 (GRILEGRHEEA) are enriched in basic and acidic residues. Ser92 carries the post-translational modification Phosphoserine. Residues 112 to 146 (WEQELESLHHVIEMKNERIHELEKQLFLLEMLKEK) adopt a coiled-coil conformation.

This sequence belongs to the CCDC69 family.

It is found in the cytoplasm. Its subcellular location is the cytoskeleton. The protein localises to the spindle. The protein resides in the midbody. May act as a scaffold to regulate the recruitment and assembly of spindle midzone components. Required for the localization of AURKB and PLK1 to the spindle midzone. This Mus musculus (Mouse) protein is Coiled-coil domain-containing protein 69 (Ccdc69).